Consider the following 140-residue polypeptide: MIDQLQGTWKSISCENSEDYMKELGIGRASRKLGRLAKPTVTISTDGDVITIKTKSIFKNNEISFKLGEEFEEITPGGHKTKSKVTLDKESLIQVQDWDGKETTITRKLVDGKMVVESTVNSVICTRTYEKVSSNSVSNS.

A fatty acid-binding positions include Arg-107 and 127 to 129 (RTY).

It belongs to the calycin superfamily. Fatty-acid binding protein (FABP) family. As to expression, expressed in a number of retinoblastoma cell lines.

Functionally, may play a role in lipid transport. The sequence is that of Fatty acid-binding protein 12 (FABP12) from Homo sapiens (Human).